The chain runs to 433 residues: Serine hydroxymethyltransferase (433 aa).

Residues L132 and 136–138 each bind (6S)-5,6,7,8-tetrahydrofolate; that span reads GHL. At K241 the chain carries N6-(pyridoxal phosphate)lysine.

The protein belongs to the SHMT family. As to quaternary structure, homodimer. The cofactor is pyridoxal 5'-phosphate.

It localises to the cytoplasm. It carries out the reaction (6R)-5,10-methylene-5,6,7,8-tetrahydrofolate + glycine + H2O = (6S)-5,6,7,8-tetrahydrofolate + L-serine. The protein operates within one-carbon metabolism; tetrahydrofolate interconversion. Its pathway is amino-acid biosynthesis; glycine biosynthesis; glycine from L-serine: step 1/1. Catalyzes the reversible interconversion of serine and glycine with tetrahydrofolate (THF) serving as the one-carbon carrier. This reaction serves as the major source of one-carbon groups required for the biosynthesis of purines, thymidylate, methionine, and other important biomolecules. Also exhibits THF-independent aldolase activity toward beta-hydroxyamino acids, producing glycine and aldehydes, via a retro-aldol mechanism. In Afipia carboxidovorans (strain ATCC 49405 / DSM 1227 / KCTC 32145 / OM5) (Oligotropha carboxidovorans), this protein is Serine hydroxymethyltransferase.